Reading from the N-terminus, the 277-residue chain is Transcription factor WRKY19 (277 aa).

The WRKY DNA-binding region spans 100-168 (QDTASLDDGL…YLGDHTCGQA (69 aa)).

The protein belongs to the WRKY group III family.

The protein localises to the nucleus. Its function is as follows. May play a role in defense responses. In Oryza sativa subsp. japonica (Rice), this protein is Transcription factor WRKY19.